We begin with the raw amino-acid sequence, 1451 residues long: Murinoglobulin-2 (1451 aa).

A signal peptide spans 1 to 27; the sequence is MWKSRRAQLCLFSVLLAFLPSASSLNG. Disulfide bonds link Cys48/Cys86, Cys251/Cys276, and Cys269/Cys288. Asn55 is a glycosylation site (N-linked (GlcNAc...) asparagine). Asn294, Asn313, and Asn500 each carry an N-linked (GlcNAc...) asparagine glycan. Cystine bridges form between Cys461/Cys555, Cys587/Cys773, and Cys634/Cys680. The bait region stretch occupies residues 677–734; it reads PKICFDSAPMSGPRGKFDLAFSSEVSGTLQKGSSKRPQPEEPPREDPPPKDPLAETIR. The interval 703 to 728 is disordered; that stretch reads GTLQKGSSKRPQPEEPPREDPPPKDP. Positions 713–728 are enriched in basic and acidic residues; it reads PQPEEPPREDPPPKDP. Residues Asn749, Asn776, and Asn871 are each glycosylated (N-linked (GlcNAc...) asparagine). Disulfide bonds link Cys849-Cys885, Cys923-Cys1274, Cys1081-Cys1104, and Cys1298-Cys1444. Residues 974–977 constitute a cross-link (isoglutamyl cysteine thioester (Cys-Gln)); sequence CGEQ. Asn1401 carries an N-linked (GlcNAc...) asparagine glycan.

The protein belongs to the protease inhibitor I39 (alpha-2-macroglobulin) family. Monomer. As to expression, plasma.

The protein resides in the secreted. Functionally, a proteinase activates the inhibitor by specific proteolysis in the bait region, which, by an unknown mechanism leads to reaction at the cysteinyl-glutamyl internal thiol ester site and to a conformational change, whereby the proteinase is trapped and/or covalently bound to the inhibitor. While in the tetrameric proteinase inhibitors steric inhibition is sufficiently strong, monomeric forms need a covalent linkage between the activated glutamyl residue of the original thiol ester and a terminal amino group of a lysine or another nucleophilic group on the proteinase, for inhibition to be effective. The polypeptide is Murinoglobulin-2 (Mug2) (Mus musculus (Mouse)).